The following is an 867-amino-acid chain: Ataxin-7 (867 aa).

The span at 1–15 shows a compositional bias: basic and acidic residues; that stretch reads MSERAADDVRGEPRR. Residues 1-59 form a disordered region; it reads MSERAADDVRGEPRRAAGGAAAARQQQQQPQPLQPQRQHPPLRRPRAEDGGTGDTTTSA. Positions 16–39 are enriched in low complexity; it reads AAGGAAAARQQQQQPQPLQPQRQH. Lysine 222 bears the N6-acetyllysine mark. Residue lysine 243 forms a Glycyl lysine isopeptide (Lys-Gly) (interchain with G-Cter in SUMO); alternate linkage. Residue lysine 243 forms a Glycyl lysine isopeptide (Lys-Gly) (interchain with G-Cter in SUMO2); alternate linkage. Residues 320–387 enclose the SCA7 domain; the sequence is KRLSEREFDP…KAREKELIRH (68 aa). The segment covering 379 to 400 has biased composition (basic and acidic residues); it reads AREKELIRHDSQQVPHPLRDPH. Disordered regions lie at residues 379-483, 600-711, and 845-867; these read AREK…EESV, HGTT…SHSV, and TGNISGAQGLTNNSLLHQPKARP. Composition is skewed to pro residues over residues 426-437 and 447-462; these read PQTPSLPRPPGC and IDPPPGQESPHPPLPA. A compositionally biased stretch (acidic residues) spans 472–481; the sequence is EEGEGDDREE. Over residues 619-647 the composition is skewed to low complexity; that stretch reads SVQSRQVSASSSPPSTPSGLSSVPSSPLS. Residues 649–659 show a composition bias toward basic residues; that stretch reads KPQKWKPSKSI. Residues 665 to 674 show a composition bias toward polar residues; it reads SALSTNCHNA. The segment covering 689-711 has biased composition (low complexity); sequence SSPLLVPSSSSSSSSSSSSSHSV. The span at 846 to 860 shows a compositional bias: polar residues; that stretch reads GNISGAQGLTNNSLL.

It belongs to the ataxin-7 family. In terms of assembly, component of the SAGA transcription coactivator-HAT complex, at least composed of SUPT3H, GCN5L2, TAF5L, TAF6L, SUPT7L, TADA3L, TAD1L, TAF10, TAF12, TRRAP, TAF9 and ATXN7. The STAGA core complex is associated with a subcomplex required for histone deubiquitination composed of ATXN7L3, ENY2 and USP22. Interacts with SORBS1, PSMC1 and CRX. Interacts with TRRAP, GCN5L2 and TAF10. Interacts with alpha tubulin. Proteolytically cleaved by caspase-7 (CASP7). Post-translationally, sumoylation has no effect on subcellular location or interaction with components of the STAGA complex. As to expression, widely expressed in adult tissues, with the highest expression in heart, brain, liver and kidney.

The protein localises to the nucleus. Its subcellular location is the nucleolus. The protein resides in the nucleus matrix. It is found in the cytoplasm. It localises to the cytoskeleton. Its function is as follows. Acts as a component of the SAGA (aka STAGA) transcription coactivator-HAT complex. Mediates the interaction of SAGA complex with the CRX and is involved in CRX-dependent gene activation. Probably involved in tethering the deubiquitination module within the SAGA complex. Necessary for microtubule cytoskeleton stabilization. Involved in neurodegeneration. The sequence is that of Ataxin-7 (Atxn7) from Mus musculus (Mouse).